A 415-amino-acid chain; its full sequence is Branched-chain-amino-acid aminotransferase, cytosolic (415 aa).

Position 244 is an N6-(pyridoxal phosphate)lysine (Lys244).

Belongs to the class-IV pyridoxal-phosphate-dependent aminotransferase family. Requires pyridoxal 5'-phosphate as cofactor.

The protein resides in the cytoplasm. The enzyme catalyses L-leucine + 2-oxoglutarate = 4-methyl-2-oxopentanoate + L-glutamate. It carries out the reaction L-isoleucine + 2-oxoglutarate = (S)-3-methyl-2-oxopentanoate + L-glutamate. It catalyses the reaction L-valine + 2-oxoglutarate = 3-methyl-2-oxobutanoate + L-glutamate. Functionally, catalyzes the first reaction in the catabolism of the essential branched chain amino acids leucine, isoleucine, and valine. The polypeptide is Branched-chain-amino-acid aminotransferase, cytosolic (bcat-1) (Caenorhabditis elegans).